We begin with the raw amino-acid sequence, 238 residues long: Ribonuclease PH (238 aa).

Residues Arg86 and 124–126 each bind phosphate; that span reads GTR.

It belongs to the RNase PH family. Homohexameric ring arranged as a trimer of dimers.

It catalyses the reaction tRNA(n+1) + phosphate = tRNA(n) + a ribonucleoside 5'-diphosphate. In terms of biological role, phosphorolytic 3'-5' exoribonuclease that plays an important role in tRNA 3'-end maturation. Removes nucleotide residues following the 3'-CCA terminus of tRNAs; can also add nucleotides to the ends of RNA molecules by using nucleoside diphosphates as substrates, but this may not be physiologically important. Probably plays a role in initiation of 16S rRNA degradation (leading to ribosome degradation) during starvation. In Marinobacter nauticus (strain ATCC 700491 / DSM 11845 / VT8) (Marinobacter aquaeolei), this protein is Ribonuclease PH.